The following is a 240-amino-acid chain: Ubiquinone biosynthesis O-methyltransferase (240 aa).

S-adenosyl-L-methionine-binding residues include arginine 36, glycine 60, aspartate 81, and leucine 123.

It belongs to the methyltransferase superfamily. UbiG/COQ3 family.

The enzyme catalyses a 3-demethylubiquinol + S-adenosyl-L-methionine = a ubiquinol + S-adenosyl-L-homocysteine + H(+). It catalyses the reaction a 3-(all-trans-polyprenyl)benzene-1,2-diol + S-adenosyl-L-methionine = a 2-methoxy-6-(all-trans-polyprenyl)phenol + S-adenosyl-L-homocysteine + H(+). Its pathway is cofactor biosynthesis; ubiquinone biosynthesis. O-methyltransferase that catalyzes the 2 O-methylation steps in the ubiquinone biosynthetic pathway. The sequence is that of Ubiquinone biosynthesis O-methyltransferase from Rickettsia bellii (strain OSU 85-389).